The following is an 857-amino-acid chain: Envelope glycoprotein B (857 aa).

Positions 1-21 (MTRRRVLSVVVLLAALACRLG) are cleaved as a signal peptide. Residues 22-732 (AQTPEQPAPP…SGFISFFKNP (711 aa)) are Virion surface-facing. Disulfide bonds link Cys-51–Cys-528, Cys-68–Cys-484, Cys-141–Cys-206, Cys-295–Cys-342, and Cys-551–Cys-588. An N-linked (GlcNAc...) asparagine; by host glycan is attached at Asn-76. The interval 108-114 (IYNGWYA) is involved in fusion and/or binding to host membrane. A glycan (N-linked (GlcNAc...) asparagine; by host) is linked at Asn-163. The involved in fusion and/or binding to host membrane stretch occupies residues 192-200 (GWLIWTYRT). Residues Asn-290, Asn-329, Asn-348, and Asn-395 are each glycosylated (N-linked (GlcNAc...) asparagine; by host). The disordered stretch occupies residues 398–452 (ELTTPTSSPPSSPSPPAPPAARGSTSAAVLRRRRRDAGNATTPVPPAAPGKSLGT). Pro residues predominate over residues 404-416 (SSPPSSPSPPAPP). Asn-436, Asn-563, and Asn-629 each carry an N-linked (GlcNAc...) asparagine; by host glycan. Hydrophobic membrane proximal region stretches follow at residues 678-730 (LDNA…SFFK) and 709-729 (NLVS…ISFF). The chain crosses the membrane as a helical span at residues 733 to 753 (FGGMLILVLVAGVVILVISLT). The Intravirion segment spans residues 754–857 (RRTRQMSQQP…ALLGEAETEF (104 aa)). A disordered region spans residues 832-857 (FPGLRRRRYHDPETAAALLGEAETEF). The span at 845–857 (TAAALLGEAETEF) shows a compositional bias: low complexity.

Belongs to the herpesviridae glycoprotein B family. As to quaternary structure, homotrimer; disulfide-linked. Binds to heparan sulfate proteoglycans. Interacts with gH/gL heterodimer. In terms of processing, a proteolytic cleavage by host furin generates two subunits that remain linked by disulfide bonds.

It is found in the virion membrane. The protein resides in the host cell membrane. The protein localises to the host endosome membrane. Its subcellular location is the host Golgi apparatus membrane. Its function is as follows. Envelope glycoprotein that forms spikes at the surface of virion envelope. Essential for the initial attachment to heparan sulfate moieties of the host cell surface proteoglycans. Involved in fusion of viral and cellular membranes leading to virus entry into the host cell. Following initial binding to its host receptors, membrane fusion is mediated by the fusion machinery composed at least of gB and the heterodimer gH/gL. May be involved in the fusion between the virion envelope and the outer nuclear membrane during virion egress. The chain is Envelope glycoprotein B from Epstein-Barr virus (strain GD1) (HHV-4).